We begin with the raw amino-acid sequence, 325 residues long: ATP phosphoribosyltransferase (325 aa).

The protein belongs to the ATP phosphoribosyltransferase family. Long subfamily. Mg(2+) serves as cofactor.

The protein resides in the cytoplasm. The enzyme catalyses 1-(5-phospho-beta-D-ribosyl)-ATP + diphosphate = 5-phospho-alpha-D-ribose 1-diphosphate + ATP. The protein operates within amino-acid biosynthesis; L-histidine biosynthesis; L-histidine from 5-phospho-alpha-D-ribose 1-diphosphate: step 1/9. Its activity is regulated as follows. Feedback inhibited by histidine. Its function is as follows. Catalyzes the condensation of ATP and 5-phosphoribose 1-diphosphate to form N'-(5'-phosphoribosyl)-ATP (PR-ATP). Has a crucial role in the pathway because the rate of histidine biosynthesis seems to be controlled primarily by regulation of HisG enzymatic activity. This chain is ATP phosphoribosyltransferase, found in Nitrobacter hamburgensis (strain DSM 10229 / NCIMB 13809 / X14).